Consider the following 1065-residue polypeptide: Carbamoyl phosphate synthase large chain (1065 aa).

Positions 1-401 (MPKRRDIETI…SLLKAVRSLE (401 aa)) are carboxyphosphate synthetic domain. Residues Arg129, Arg169, Gly175, Gly176, Arg208, Ile210, Glu215, Gly241, Ile242, His243, Gln284, and Glu298 each contribute to the ATP site. Residues 133–327 (RALMNELGEP…IAKLAAKIAV (195 aa)) enclose the ATP-grasp 1 domain. Mg(2+) is bound by residues Gln284, Glu298, and Asn300. Mn(2+) is bound by residues Gln284, Glu298, and Asn300. The oligomerization domain stretch occupies residues 402-546 (IGVHHLELNE…YSTYEEENES (145 aa)). The tract at residues 547 to 929 (IVTEKPSVIV…ALYKGLVASG (383 aa)) is carbamoyl phosphate synthetic domain. One can recognise an ATP-grasp 2 domain in the interval 671–861 (EQALSELGIP…MANLATKAIL (191 aa)). Positions 707, 746, 748, 752, 777, 778, 779, 780, 820, and 832 each coordinate ATP. Residues Gln820, Glu832, and Asn834 each coordinate Mg(2+). The Mn(2+) site is built by Gln820, Glu832, and Asn834. Residues 930–1065 (IHIQPHGAVL…TAMTEGLVRS (136 aa)) form the MGS-like domain. The allosteric domain stretch occupies residues 930–1065 (IHIQPHGAVL…TAMTEGLVRS (136 aa)).

Belongs to the CarB family. In terms of assembly, composed of two chains; the small (or glutamine) chain promotes the hydrolysis of glutamine to ammonia, which is used by the large (or ammonia) chain to synthesize carbamoyl phosphate. Tetramer of heterodimers (alpha,beta)4. Mg(2+) is required as a cofactor. Mn(2+) serves as cofactor.

It carries out the reaction hydrogencarbonate + L-glutamine + 2 ATP + H2O = carbamoyl phosphate + L-glutamate + 2 ADP + phosphate + 2 H(+). It catalyses the reaction hydrogencarbonate + NH4(+) + 2 ATP = carbamoyl phosphate + 2 ADP + phosphate + 2 H(+). Its pathway is amino-acid biosynthesis; L-arginine biosynthesis; carbamoyl phosphate from bicarbonate: step 1/1. It functions in the pathway pyrimidine metabolism; UMP biosynthesis via de novo pathway; (S)-dihydroorotate from bicarbonate: step 1/3. In terms of biological role, large subunit of the glutamine-dependent carbamoyl phosphate synthetase (CPSase). CPSase catalyzes the formation of carbamoyl phosphate from the ammonia moiety of glutamine, carbonate, and phosphate donated by ATP, constituting the first step of 2 biosynthetic pathways, one leading to arginine and/or urea and the other to pyrimidine nucleotides. The large subunit (synthetase) binds the substrates ammonia (free or transferred from glutamine from the small subunit), hydrogencarbonate and ATP and carries out an ATP-coupled ligase reaction, activating hydrogencarbonate by forming carboxy phosphate which reacts with ammonia to form carbamoyl phosphate. This chain is Carbamoyl phosphate synthase large chain, found in Bacillus caldolyticus.